Consider the following 1176-residue polypeptide: DNA-directed RNA polymerase subunit beta (1176 aa).

Residues 13-30 show a composition bias toward polar residues; that stretch reads TDASLHQGRPQSSSNSSV. The segment at 13–35 is disordered; that stretch reads TDASLHQGRPQSSSNSSVPGAPN.

It belongs to the RNA polymerase beta chain family. In terms of assembly, the RNAP catalytic core consists of 2 alpha, 1 beta, 1 beta' and 1 omega subunit. When a sigma factor is associated with the core the holoenzyme is formed, which can initiate transcription.

It carries out the reaction RNA(n) + a ribonucleoside 5'-triphosphate = RNA(n+1) + diphosphate. DNA-dependent RNA polymerase catalyzes the transcription of DNA into RNA using the four ribonucleoside triphosphates as substrates. The chain is DNA-directed RNA polymerase subunit beta from Mycobacterium ulcerans (strain Agy99).